The sequence spans 490 residues: GPI-anchored wall transfer protein 1 (490 aa).

Residues 1–19 lie on the Lumenal side of the membrane; the sequence is MSTLKQRKEDFVTGLNGGS. A helical membrane pass occupies residues 20–40; it reads ITEINAVTSIALVTYISWNLL. Over 41–54 the chain is Cytoplasmic; it reads KNSNLMPPGISSVQ. A helical transmembrane segment spans residues 55–75; it reads YIIDFALNWVALLLSITIYAS. Position 76 (E76) is a topological domain, lumenal. The helical transmembrane segment at 77 to 97 threads the bilayer; the sequence is PYLLNTLILLPCLLAFIYGKF. Residues 98 to 128 are Cytoplasmic-facing; it reads TSSSKPSNPIYNKKKMITQRFQLEKKPYITA. The chain crosses the membrane as a helical span at residues 129–149; sequence YRGGMLILTAIAILAVDFPIF. Residues 150-157 are Lumenal-facing; that stretch reads PRRFAKVE. A helical membrane pass occupies residues 158 to 178; it reads TWGTSLMDLGVGSFVFSNGIV. Topologically, residues 179–199 are cytoplasmic; that stretch reads SSRALLKNLSLKSKPSFLKNA. The helical transmembrane segment at 200–220 threads the bilayer; it reads FNALKSGGTLLFLGLLRLFFV. The Lumenal segment spans residues 221–231; the sequence is KNLEYQEHVTE. Residues 232–252 form a helical membrane-spanning segment; that stretch reads YGVHWNFFITLSLLPLVLTFI. The Cytoplasmic portion of the chain corresponds to 253–257; the sequence is DPVTR. The helical transmembrane segment at 258 to 278 threads the bilayer; that stretch reads MVPRCSIAIFISCIYEWLLLK. Residues 279–301 are Lumenal-facing; it reads DDRTLNFLILADRNCFFSANREG. Residues 302-322 form a helical membrane-spanning segment; it reads IFSFLGYCSIFLWGQNTGFYL. The Cytoplasmic portion of the chain corresponds to 323-356; sequence LGNKPTLNNLYKPSTQDVVAASKKSSTWDYWTSV. Residues 357 to 377 traverse the membrane as a helical segment; it reads TPLSGLCIWSTIFLVISQLVF. The Lumenal segment spans residues 378 to 390; the sequence is QYHPYSVSRRFAN. Residues 391-411 form a helical membrane-spanning segment; the sequence is LPYTLWVITYNLLFLTGYCLT. Residues 412–435 are Cytoplasmic-facing; sequence DKIFGNSSEYYKVAECLESINSNG. A helical transmembrane segment spans residues 436–456; it reads LFLFLLANVSTGLVNMSMVTI. The Lumenal segment spans residues 457–460; that stretch reads DSSP. Residues 461–481 form a helical membrane-spanning segment; sequence LKSFLVLLAYCSFIAVISVFL. Topologically, residues 482–490 are cytoplasmic; that stretch reads YRKRIFIKL.

This sequence belongs to the PIGW family.

The protein localises to the endoplasmic reticulum membrane. The protein operates within glycolipid biosynthesis; glycosylphosphatidylinositol-anchor biosynthesis. Functionally, probable acetyltransferase, which acetylates the inositol ring of phosphatidylinositol during biosynthesis of GPI-anchor. Acetylation during GPI-anchor biosynthesis is not essential for the subsequent mannosylation and is usually removed soon after the attachment of GPIs to proteins. The chain is GPI-anchored wall transfer protein 1 (GWT1) from Saccharomyces cerevisiae (strain ATCC 204508 / S288c) (Baker's yeast).